The primary structure comprises 469 residues: ATP synthase subunit beta (469 aa).

156 to 163 serves as a coordination point for ATP; it reads GGAGVGKT.

Belongs to the ATPase alpha/beta chains family. F-type ATPases have 2 components, CF(1) - the catalytic core - and CF(0) - the membrane proton channel. CF(1) has five subunits: alpha(3), beta(3), gamma(1), delta(1), epsilon(1). CF(0) has three main subunits: a(1), b(2) and c(9-12). The alpha and beta chains form an alternating ring which encloses part of the gamma chain. CF(1) is attached to CF(0) by a central stalk formed by the gamma and epsilon chains, while a peripheral stalk is formed by the delta and b chains.

The protein localises to the cell membrane. It carries out the reaction ATP + H2O + 4 H(+)(in) = ADP + phosphate + 5 H(+)(out). In terms of biological role, produces ATP from ADP in the presence of a proton gradient across the membrane. The catalytic sites are hosted primarily by the beta subunits. In Lactococcus lactis subsp. lactis (strain IL1403) (Streptococcus lactis), this protein is ATP synthase subunit beta.